The following is a 376-amino-acid chain: Actin (376 aa).

This sequence belongs to the actin family.

The protein localises to the cytoplasm. The protein resides in the cytoskeleton. The enzyme catalyses ATP + H2O = ADP + phosphate + H(+). Functionally, actins are highly conserved proteins that are involved in various types of cell motility and are ubiquitously expressed in all eukaryotic cells. This is Actin from Trypanosoma cruzi.